The sequence spans 167 residues: G/U mismatch-specific DNA glycosylase (167 aa).

The protein belongs to the uracil-DNA glycosylase (UDG) superfamily. TDG/mug family. Binds DNA as a monomer.

Its subcellular location is the cytoplasm. The enzyme catalyses Specifically hydrolyzes mismatched double-stranded DNA and polynucleotides, releasing free uracil.. Its function is as follows. Excises ethenocytosine and uracil, which can arise by alkylation or deamination of cytosine, respectively, from the corresponding mispairs with guanine in ds-DNA. It is capable of hydrolyzing the carbon-nitrogen bond between the sugar-phosphate backbone of the DNA and the mispaired base. The complementary strand guanine functions in substrate recognition. Required for DNA damage lesion repair in stationary-phase cells. The protein is G/U mismatch-specific DNA glycosylase of Pectobacterium carotovorum subsp. carotovorum (strain PC1).